Consider the following 114-residue polypeptide: MNGGLCLCVLMAVLAAGTLAQPVPPADSAVPGAQEEEAHRRQLRAVQKVDGESRAHLGALLARYIQQARKAPSGRVSMIKNLQSLDPSHRISDRDYMGWMDFGRRSAEEYEYTS.

A signal peptide spans 1 to 20 (MNGGLCLCVLMAVLAAGTLA). Y96 is subject to Sulfotyrosine. The residue at position 102 (F102) is a Phenylalanine amide. A propeptide spanning residues 106-114 (SAEEYEYTS) is cleaved from the precursor. Residues Y110 and Y112 each carry the sulfotyrosine modification.

It belongs to the gastrin/cholecystokinin family. In terms of assembly, binds to CCK-A receptors in the pancreas and CCK-B receptors in the brain. The precursor is cleaved by proteases to produce a number of active cholecystokinins. Brain contains CCK-octapeptide (CCK8) and several CCK-desoctapeptides; whereas pig gut contains intact CCK33, CCK39, and CCK58 as well as CCK-octapeptide and the CCK-desoctapeptides. Distribution differences are due to tissue-specific post-translational processing events. In terms of processing, the precursor is cleaved by ACE, which removes the Gly-Arg-Arg peptide at the C-terminus, leading to mature hormone. As to expression, synthesized in both cerebral cortex and duodenal mucosa.

It localises to the secreted. This peptide hormone induces gall bladder contraction and the release of pancreatic enzymes in the gut. Its function in the brain is not clear. Binding to CCK-A receptors stimulates amylase release from the pancreas, binding to CCK-B receptors stimulates gastric acid secretion. This is Cholecystokinin (CCK) from Sus scrofa (Pig).